The primary structure comprises 509 residues: Glucose-1-phosphate adenylyltransferase large subunit 4, chloroplastic/amyloplastic (509 aa).

The transit peptide at 1-36 (MATCSWAATTAAAAPPRPPARCRSRVAALRRTAAAS) directs the protein to the chloroplast.

Belongs to the bacterial/plant glucose-1-phosphate adenylyltransferase family. Heterotetramer composed of two small and two large subunits. Expressed in leaves and stems.

Its subcellular location is the plastid. It is found in the chloroplast. The catalysed reaction is alpha-D-glucose 1-phosphate + ATP + H(+) = ADP-alpha-D-glucose + diphosphate. The protein operates within glycan biosynthesis; starch biosynthesis. Activated by 3'phosphoglycerate, inhibited by orthophosphate. Allosteric regulation. Functionally, involved in synthesis of starch. Catalyzes the synthesis of ADP-glucose, a molecule that serves as an activated glycosyl donor for alpha-1,4-glucan synthesis. Essential for starch synthesis in leaf chloroplasts. In Oryza sativa subsp. japonica (Rice), this protein is Glucose-1-phosphate adenylyltransferase large subunit 4, chloroplastic/amyloplastic.